The following is a 748-amino-acid chain: Junctophilin-3 (748 aa).

The Cytoplasmic portion of the chain corresponds to Met-1–Ile-727. 6 MORN repeats span residues Tyr-15–Gly-37, Tyr-39–Thr-60, Tyr-61–Val-82, Tyr-83–Ala-105, Tyr-107–Thr-129, and Tyr-130–Met-152. The segment at Ser-230–Asp-259 is disordered. Residues Lys-231–Phe-244 are compositionally biased toward low complexity. Over residues Gly-249–Asp-259 the composition is skewed to polar residues. MORN repeat units lie at residues Tyr-288–Lys-310 and Tyr-311–Lys-333. Residues Ala-416–Asn-496 are disordered. The residue at position 440 (Ser-440) is a Phosphoserine. A compositionally biased stretch (polar residues) spans Ser-448–Ser-457. A Phosphothreonine modification is found at Thr-451. Phosphoserine is present on Ser-457. The residue at position 471 (Thr-471) is a Phosphothreonine. 2 positions are modified to phosphoserine: Ser-475 and Ser-506. Disordered stretches follow at residues Cys-526–Gly-597 and His-624–Gly-649. Basic and acidic residues predominate over residues Leu-639–Gly-649. Phosphoserine is present on residues Ser-703 and Ser-710. Residues Leu-728–Ile-748 form a helical; Anchor for type IV membrane protein membrane-spanning segment.

The protein belongs to the junctophilin family. Specifically expressed in brain.

The protein localises to the cell membrane. It localises to the endoplasmic reticulum membrane. In terms of biological role, junctophilins contribute to the formation of junctional membrane complexes (JMCs) which link the plasma membrane with the endoplasmic or sarcoplasmic reticulum in excitable cells. Provides a structural foundation for functional cross-talk between the cell surface and intracellular calcium release channels. JPH3 is brain-specific and appears to have an active role in certain neurons involved in motor coordination and memory. The protein is Junctophilin-3 (JPH3) of Homo sapiens (Human).